A 453-amino-acid chain; its full sequence is Kynureninase (453 aa).

Residues leucine 114, threonine 115, 142–145 (FPSD), aspartate 232, histidine 235, and tyrosine 257 each bind pyridoxal 5'-phosphate. N6-(pyridoxal phosphate)lysine is present on lysine 258. Residue tryptophan 286 coordinates pyridoxal 5'-phosphate.

Belongs to the kynureninase family. Homodimer. It depends on pyridoxal 5'-phosphate as a cofactor.

The protein resides in the cytoplasm. It carries out the reaction L-kynurenine + H2O = anthranilate + L-alanine + H(+). It catalyses the reaction 3-hydroxy-L-kynurenine + H2O = 3-hydroxyanthranilate + L-alanine + H(+). Its pathway is amino-acid degradation; L-kynurenine degradation; L-alanine and anthranilate from L-kynurenine: step 1/1. It functions in the pathway cofactor biosynthesis; NAD(+) biosynthesis; quinolinate from L-kynurenine: step 2/3. In terms of biological role, catalyzes the cleavage of L-kynurenine (L-Kyn) and L-3-hydroxykynurenine (L-3OHKyn) into anthranilic acid (AA) and 3-hydroxyanthranilic acid (3-OHAA), respectively. This is Kynureninase from Cryptococcus neoformans var. neoformans serotype D (strain B-3501A) (Filobasidiella neoformans).